Here is an 866-residue protein sequence, read N- to C-terminus: Primer-independent DNA polymerase PolB (866 aa).

An exonuclease domain region spans residues 50–286 (SDLTLHIGFD…DRVPATIGAM (237 aa)). Positions 287 to 385 (AVSRFTKTLK…GLLDILTPDY (99 aa)) are palm1 domain. A TPR1 domain region spans residues 386–481 (GNIRLSKNPD…NSESTSVFLP (96 aa)). The segment at 482–522 (FVQQVRENRNRHIKGSLEEKFWKEIGNSLYGKLAQGLRAKT) is fingers domain. Residues 523–549 (AFDTARGLNRSLPPSSVTQPFFAAHVT) are TPR2 domain. The tract at residues 550-678 (GFIRAVVGEL…PGQTLSRSTL (129 aa)) is palm2 domain. The thumb domain stretch occupies residues 679–866 (ISTREMWLSE…RKYPTFCLPV (188 aa)).

It depends on Mn(2+) as a cofactor.

It catalyses the reaction DNA(n) + a 2'-deoxyribonucleoside 5'-triphosphate = DNA(n+1) + diphosphate. DNA polymerase with primer-independent templated DNA polymerization activity, primer-dependent DNA polymerization activity with strand displacement, translesion synthesis activity across non-bulky base damage, 3'-5' exodeoxyribonuclease activity, and de novo primer synthesis activity. The enzyme is processive and faithful. Translation synthesis across abasic sites is coupled to de novo primer synthesis. Overexpression of wild-type protein increases survival of cells upon mitomycin C or UV treatment. The polypeptide is Primer-independent DNA polymerase PolB (pi-polB) (Escherichia coli).